The chain runs to 4299 residues: MDNIYQRIENYLIKLFQTISETNNNNNNNNTNNNVGIKFENDLLLVNELGSIILKELVLEEEIGLVASLLFTGDHSLLKYLEKSSTISNKENVKIKVSILNLIAEFIEILQVRTDDYAIAIKNTCVLVFRKDQSHSVQAAAFGPIKKILHLMSRVLKQGSIVAESFGVSEMTQLFLLQFTCGKLTQTVRGEIIVVLGLFTEYFSSNMCDRNQQLSFIFMETLGGQLRSKSPESTLIQSCLKGLNSLLVHFSGDFIASDPKNVQLIYQYVYICLDPASSTQRFEIPRAAMKIVARHAVLLRQYLAEHSQPFYTRIEHWCNHINKLNRDIAFTAVDSFFQQISKELTSGNRSLEADQSTFKFFIRKFYSIFENNNSSRFELSIAIRGCGRFASPVKSFMGEWELKSLLNSLFKFSEKLMVVKIENIDEITLHLSSFINAFACILYELNELEFWYLDHIEQVLETYFIIFPHLFVKSRDRYFKAVNRLISSLFYHGEYLKILLSRFVKKGLLITFSKPNDSIKNLITTANTPFYQVYKDLWYNLLNPTIDTIDKDLNSTIKKENNNNNNNKNKNNNNNQTLTKEEISKSIKKLVYDEIVSSILSIIKKLDLQYQKDENDNNSNSNSNNNNNNDQDNNKISIIEYESEINQLKPVTSKDIELFLGLVEFFKLFISKYNTELFVQWIYIFGKEMISFSKKYPLISGFYKLVQIVMQICKSQKYFNELQQDDNINSVIFNNQIIDEQLQQQQDIMDIDDTDNNSNSNNKINKKLTNSLEEDKNNCFILFKKYIKEVSNFISHYKDELLSSCIELLLSLPKQLISIPLLVPIANLAFQYGISYLPLAHVGLNAIEYWNLVVPDQVHKHLDQLLPSLNDYLKISTNSSDSTSGGDIDIDSGGSMGGGGVVPPPSSSSRHRKMKFKSNSSLIDPKQLQFKTSIEDLQNRIIRLLGQLGGDNVHFLGKVSLVGEEIVNGVAWDTEPKVLIKIPFADQNNIDIYLDVILPNVVNLAEKSPNRQIKVAAGELLHSVLLMMIGNSANQSQANQISYSRLYRKIFPSLICLSTDVEQVTKQLFQPLVFQMIHWFTRNKKQESDDTMNLLNAIVDAVGNPLDGARRDFAGQCLCEFAKWSLKNTSVKQQEKNAFNFKSILKRIYSLAHHPDPYKRLGAAISFNQLYRIFREEDSLVDQFIFEILHNIFFSLRIGDDLTNTSSSKNNSNSNSNNNNNNNNNSEDGTEDSIVEIASKYSNVLAALTKVIIKRADMLNKPSNTRREHKDLSQFVQWVFQNGCSRTESIVRYESMILFTQLVTLLPNIKTPLQWVKERIKSNGIQFIVSIAEQQGGGVGGGSSNGNTSLGRIPKIEIGKHKDIEFWFRNLSTSLNIYLWFFSEGFFEPIQILTSREFKSSLLSSAFHTFTTQFSMLNFNSNLKTNQQQQQQQVSMFSSMTPKEIDQFNRLKCNVITNLFGLYILLLEKYKFEQVIDYGGVAFVQLLVKCLMDPQSVGFVNNYLEEREVELSKSSRQDIRNLMSRTFKFPPLLEIINNIIKLLIQIKPKYNDILHKELMEYILPNNSNNNNNSSSSGNNKSMFSLIDIRQLINTEGTDRLIHLIHSYQILYKYNLLDSILLENYNEQSEQGIQDLPKSSLEFSEFIFDYLFNNCENLSPSKLLISKELIQLALTIGIKPIKLLSLIINPNVQNTTTTTTTTSTTTTTTTTTTSTNNNNDNNNEFIKDIHDIFYKTLFTEINNYISNNFQLFLPLLANRIIETNQIHKVLNDVCIMKQQQQPNRGFKDIIESIVLFLNSISEWTLNSNLKLVEKENIIEFTKNLIKIDPIQFFENKHCYEFVYNIITNYLCRSNPLTFKNKVLVLLPYLLSYPKHNNFDLIKQKLNEIVVYDFPLNSKDLTVKSPIYNEYITCIERLLETFELTKNPLVIDTLLHVLKETDHTHINYINLSIERSILSTNDIEAKEIFSHCFELFLNHYDELKITLIDKFCVPLISHMKENILVQIFSQHLSSLMSIIQPLQPKYLSDSQERKSSIIEKICCFHLIEALYQSLPSAIIKEKINPFFYDKPDGKGTELTAAIMKAAHSAKSEKLTSDDKYVTRSLCTKYHGAAFSALASVIVSTQTKENFFHVFFFKENKDKNEYLWENIIDTDQVFNFQPETNFLVSYSTPQSLFANDLRYLSSQYLVDSSLSQDFIAKNFLEGDNNSTTNNNNGDDGIIMQGQSQSGDNENQISNDIEIDQVNSNPSMIAMLKIIDFYQKKFVVTPPSSILFGQQSQQPKPTVGDMPKWMFEIYQKLQQGVHPNIVIFMIKIIINRPQYFERFHELWIPILMDYVVSEGNGGNGLHYFVRDVCFILLKWPNIYKSQDGGGGTTLEKHLSKFVNHLMKNTYCTDRRILKSNLNIVKSFVERWKSLFKVDKSIILELLSTKGDFKSKSRQIKTTGLVLLSILLSNGYPAYDKEYDSNTISEFKFYQVLLDHLQDFKELYDAASEVCGMILLYLSKQQQSQQQQQQSIFPQLLKDKINSILNNNENQRAFSCLYFIGLHYPLFLQGFYGKIFNLLPQISNETRLIALNIIHWCVEDIQDLYTKLKSNNIENLIRIREGEIQVVILRILYKLVQKRDTTFGTVNQILSLLLSNNWFTSNVTNEYSRSLYYDIIIYIYNNFIEYQDQSNENSKDLVLSLLIGLSDESDSINKKLLQFWDNNSKTLSASSNQRLQQFFDIMYSPETESKWVANSCCLLFQLCNRSSDFTKLLFDKPLSECTFKEVQVDSSWQHRTLNMNPLFSSSQYGIDDATTDESNGDSMQLDEIRATQAPNFTLTQTAFSEFYPSSSQSYGGTNNNTGSSQLSSSSSSSGSQSSSQNNSSSKRKQKITNDPKLINNSELRRRFKKIDDRGADERIVKFARLQVKRNIEREAYFEKSKQARENQITMIRKYRVGELPDIQIKLQDIIKPLQLLCQRDSTIGVNVFSSLFTALYKNTPKESIRTFQCNIKKLIDSIVERCKFNSTLVSSILNISEKNLEFSPEFSKIKDISLNSNNHPMAIILCEKLILSLQNTTKASTTNQAQKLQQQQQLNQGWDSLRELYKSLKEDDIIMGLIEKQMGGDIPYTKKALEFELKGDWVNVLKVYDEATSKLESGELNQYQGNLSESETALWENGRLECFTKLCNWSALKDNFNSYYPNPNQIFKEKNCDLLLSYFFEFNLKVKENWNYLYQFIADLANTKQYQYLENKFPGELAFLEVTRSDHNKASYYVSKFYQAFKHQWSSSHPLAIESRHRILQPLQKIVEVEEFLNLTSTPIINTLKLDTLLTQWKSRFPTKLDDIMVWDDLIFYRSVLLEKIYERFSSFTSDKSSDEKVKSTLIQERAILYHKMSKGARKLGNIVVSEIYFRQAVKSYPKTKDNDLAFPLVTSLIDIYCTKARNSPSPIETLDRFVKALKFIESKKDEESIINSNENLQKYLMMHGDIFWDIYQLDKKLGSTLVIDSFKKNSLPINLTSIPINSLKDELFNSTFKCYSESIKLHQKSTNLLNTTSSSPSLSISSSSSPYSSTSSSSQPKLSNEILIEKTKTKSAHLKFANFCDNILKDKISQQTTPTQFNEEVIDLATSVIVSTLEAIKEEIPGSVDKFPRLLEILTQFEQYSVIAREFKSRVSTIPCWMFIRWISQMFPYLDLPQGPLILPILLEIAKWYPQAIYFPFKISSEQFGPLAKKISAPLEKELINPLLDTLVIEFQRLTHPEHRFKDYMEEMKSLIKATPKDLNAIAKLNNEIYDDSFNPSTVSGDYNLKFAKEHEASYLSNFGKDSTKLARMDQKKFLEIFAEMSGNMNKNMKPNSTASMKLKDFSGWLADFDRSNYQTSHQMEIPGQYDGIGKPQPETHVTISSFDTNVLVMGSLRKPKRVKIHGNDELDYPFLIKGGEDLRLDQRIQQLFGIMNEILKRDTACNKRSLNVTTYQVVPMTSKVGIIEWLNDTKPLREILEEQLAHQLKTPRSNVSISKLESTKYHNDWINSFAKYLKPNSPVGPLYQQMFIHATRDDCAKKLEKQHSKVPENLLQNGIWSLSSSPESYLFIRNSFARSLASFSVCSYVIGIGDRHLENFLISQRDGRLIGIDFGHAFGTATQFLPIPELMPFRLTRQFTSFLRPLDSVGLLNHNMTYTLTALQNQKEILLTTMDVFVKEPLLDWSKLATRLVKEQGKHPKDTKNVWFPKQKIQIAKKKLELVNPAYITLEELSGSVHSGLPYEKALSEIIKGDPKHNIRAKVNKVCSSVKEQIDCLIDQSTDPNILSRAWVGWNGAL.

Residues 551 to 590 (KDLNSTIKKENNNNNNNKNKNNNNNQTLTKEEISKSIKKL) adopt a coiled-coil conformation. Disordered regions lie at residues 557-577 (IKKENNNNNNNKNKNNNNNQT), 613-633 (DENDNNSNSNSNNNNNNDQDN), 878-917 (NSSDSTSGGDIDIDSGGSMGGGGVVPPPSSSSRHRKMKFK), and 1206-1230 (SSSKNNSNSNSNNNNNNNNNSEDGT). Low complexity-rich tracts occupy residues 562–575 (NNNNNNKNKNNNNN), 617–631 (NNSNSNSNNNNNNDQ), 878–893 (NSSDSTSGGDIDIDSG), and 1206–1226 (SSSKNNSNSNSNNNNNNNNNS). Residue S2789 is modified to Phosphoserine; by autocatalysis. 2 positions are modified to phosphothreonine; by autocatalysis: T2814 and T2822. The segment covering 2832–2867 (SSSQSYGGTNNNTGSSQLSSSSSSSGSQSSSQNNSS) has biased composition (low complexity). 2 disordered regions span residues 2832–2881 (SSSQ…PKLI) and 3535–3559 (TTSSSPSLSISSSSSPYSSTSSSSQ). Residues 3031-3707 (KIKDISLNSN…YFPFKISSEQ (677 aa)) enclose the FAT domain. The PI3K/PI4K catalytic domain occupies 3887-4226 (FDTNVLVMGS…AKKKLELVNP (340 aa)). Residues 3893 to 3899 (VMGSLRK) are G-loop. Positions 4092–4100 (GIGDRHLEN) are catalytic loop. Residues 4112–4137 (GIDFGHAFGTATQFLPIPELMPFRLT) form an activation loop region. The 33-residue stretch at 4267 to 4299 (VCSSVKEQIDCLIDQSTDPNILSRAWVGWNGAL) folds into the FATC domain.

Belongs to the PI3/PI4-kinase family. DNAPK subfamily. May be phosphorylated upon DNA damage. Could be autophosphorylated. Autophosphorylation induces a conformational change that leads to remodeling of the DNA-PK complex, requisite for efficient end processing and DNA repair. Post-translationally, autophosphorylated on Ser-2789, Thr-2814 and Thr-2822. Ser-2789 is a DNA damage-inducible phosphorylation site (inducible with ionizing radiation, IR).

It localises to the nucleus. Its subcellular location is the nucleolus. The enzyme catalyses L-seryl-[protein] + ATP = O-phospho-L-seryl-[protein] + ADP + H(+). It catalyses the reaction L-threonyl-[protein] + ATP = O-phospho-L-threonyl-[protein] + ADP + H(+). With respect to regulation, inhibited by wortmannin. Activity of the enzyme seems to be attenuated by autophosphorylation. In terms of biological role, serine/threonine-protein kinase that acts as a molecular sensor for DNA damage. Is recruited to DNA ends by the Ku70/Ku80 heterodimer and is involved in DNA non-homologous end joining (NHEJ) required for double-strand break (DSB) repair and V(D)J recombination. This activity is only apparent when DNA damage is administered in G1 phase of the cell cycle. Required for efficient signaling of DNA double-stranded breaks via phosphorylation of H2AX during G1. This is DNA-dependent protein kinase catalytic subunit (dnapkcs) from Dictyostelium discoideum (Social amoeba).